We begin with the raw amino-acid sequence, 755 residues long: von Willebrand factor A domain-containing protein 2 (755 aa).

Residues 1–23 (MPPFLLLEAVCVFLFSRVPPSLP) form the signal peptide. The 172-residue stretch at 51–222 (DIMFLLDGSN…DATNGLFSTL (172 aa)) folds into the VWFA 1 domain. N147 is a glycosylation site (N-linked (GlcNAc...) asparagine). The 38-residue stretch at 296 to 333 (PGPCDSQPCQNGGTCVPEGLDGYQCLCPLAFGGEANCA) folds into the EGF-like 1 domain. Intrachain disulfides connect C299–C310, C304–C320, and C322–C332. VWFA domains lie at 343–517 (DLLF…QGKL) and 531–705 (DLVF…IEWL). An EGF-like 2 domain is found at 712-748 (PVNLCKPSPCMNEGSCVLQNGSYRCKCRDGWEGPHCE). Intrachain disulfides connect C716/C727, C721/C736, and C738/C747.

As to quaternary structure, forms monomers and multimers. In terms of processing, a 55 kDa form is produced by proteolytic cleavage. Expression is generally absent in normal colon and other normal body tissues, but it is induced an average of 78-fold in Stage II, III, and IV colon cancers, as well as in colon adenomas and colon cancer cell lines.

The protein resides in the secreted. The protein is von Willebrand factor A domain-containing protein 2 (VWA2) of Homo sapiens (Human).